Here is a 206-residue protein sequence, read N- to C-terminus: Large ribosomal subunit protein uL4 (206 aa).

The segment at 47–75 (GTQSAKTRAEVSGGGIKPWRQKGTGRARQ) is disordered.

Belongs to the universal ribosomal protein uL4 family. As to quaternary structure, part of the 50S ribosomal subunit.

Functionally, one of the primary rRNA binding proteins, this protein initially binds near the 5'-end of the 23S rRNA. It is important during the early stages of 50S assembly. It makes multiple contacts with different domains of the 23S rRNA in the assembled 50S subunit and ribosome. In terms of biological role, forms part of the polypeptide exit tunnel. The protein is Large ribosomal subunit protein uL4 of Clostridium botulinum (strain 657 / Type Ba4).